The following is a 381-amino-acid chain: KRR1 small subunit processome component homolog (381 aa).

Residues 1-51 are disordered; the sequence is MASPSLERPEKGAGKSEFRNQKPKPENQDESELLTVPDGWKEPAFSKEDNP. At alanine 2 the chain carries N-acetylalanine. Residues serine 3 and serine 5 each carry the phosphoserine modification. 2 stretches are compositionally biased toward basic and acidic residues: residues 7-27 and 39-51; these read ERPE…KPEN and GWKE…EDNP. Residue lysine 24 forms a Glycyl lysine isopeptide (Lys-Gly) (interchain with G-Cter in SUMO2) linkage. A KH domain is found at 154–206; it reads KERFVKRRQRLIGPKGSTLKALELLTNCYIMVQGNTVSAIGPFSGLKEVRKVV. A compositionally biased stretch (basic residues) spans 250–262; sequence NVNKRKEPKKKTV. Disordered stretches follow at residues 250–278 and 309–338; these read NVNK…ESQI and AISK…ASTE. Residues lysine 340 and lysine 369 each participate in a glycyl lysine isopeptide (Lys-Gly) (interchain with G-Cter in SUMO2) cross-link.

This sequence belongs to the KRR1 family. In terms of assembly, part of the small subunit (SSU) processome, composed of more than 70 proteins and the RNA chaperone small nucleolar RNA (snoRNA) U3. (Microbial infection) Directly interacts with HIV-1 protein VPR. Also identified in a complex with NR3C1 and HIV-1 protein VPR.

It is found in the nucleus. It localises to the nucleolus. Its subcellular location is the cytoplasm. In terms of biological role, part of the small subunit (SSU) processome, first precursor of the small eukaryotic ribosomal subunit. During the assembly of the SSU processome in the nucleolus, many ribosome biogenesis factors, an RNA chaperone and ribosomal proteins associate with the nascent pre-rRNA and work in concert to generate RNA folding, modifications, rearrangements and cleavage as well as targeted degradation of pre-ribosomal RNA by the RNA exosome. The sequence is that of KRR1 small subunit processome component homolog from Homo sapiens (Human).